A 348-amino-acid polypeptide reads, in one-letter code: MSVFCLQAKPTTVEILEGIDKDIQILEDYSVKYQRQMKAVVGRLLLYSILLYLMAGVVVYSWYLPEQLMGRLVLGLPFLLFPLLVWILRKVLILFFARRTEKNNFKLEDLKAQKRKILEDVMETETYKNAKLILERFDPESKKKTDFDSTPVGPQMTPKPGQELRHRNVVPQTPPASVNSASGAAARPPLASGPAYPGRSSHSAPGGPPERNLLAIAAQQSLMRKFVTPGTPIPGVGLHPPGPPLARPVLPRERGVLDRLIEYLVGDGPQNRLALVCQQCLSHNGMALKEEFEYVAFRCAYCYFLNPARKTRPQAPRLPETAGEPKLPCDLNSSSCAAEEDKQSDSGD.

The Cytoplasmic portion of the chain corresponds to 1 to 43 (MSVFCLQAKPTTVEILEGIDKDIQILEDYSVKYQRQMKAVVGR). The chain crosses the membrane as a helical span at residues 44 to 64 (LLLYSILLYLMAGVVVYSWYL). Over 65 to 67 (PEQ) the chain is Lumenal. A helical transmembrane segment spans residues 68–88 (LMGRLVLGLPFLLFPLLVWIL). Residues 89-348 (RKVLILFFAR…EEDKQSDSGD (260 aa)) lie on the Cytoplasmic side of the membrane. Positions 105–126 (FKLEDLKAQKRKILEDVMETET) form a coiled coil. The disordered stretch occupies residues 142–211 (KKKTDFDSTP…HSAPGGPPER (70 aa)). A C4-type; plays a role in ER morphology zinc finger spans residues 277–302 (CQQCLSHNGMALKEEFEYVAFRCAYC). A disordered region spans residues 313–348 (PQAPRLPETAGEPKLPCDLNSSSCAAEEDKQSDSGD). Residues 339-348 (EEDKQSDSGD) show a composition bias toward basic and acidic residues.

This sequence belongs to the lunapark family. In terms of assembly, homodimer; homodimerization requires the C4-type zinc finger motif and decreases during mitosis in a phosphorylation-dependent manner. Post-translationally, phosphorylated. Phosphorylation occurs during interphase. Phosphorylation also occurs during mitosis; these phosphorylations reduce both its homodimerization and the ER three-way tubular junction formation.

It is found in the endoplasmic reticulum membrane. Endoplasmic reticulum (ER)-shaping membrane protein that plays a role in determining ER morphology. Involved in the stabilization of nascent three-way ER tubular junctions within the ER network. May also play a role as a curvature-stabilizing protein within three-way ER tubular junction network. In Takifugu rubripes (Japanese pufferfish), this protein is Endoplasmic reticulum junction formation protein lunapark-A (lnpka).